Reading from the N-terminus, the 240-residue chain is MSGGYDLNLFISPPDCNFLCSVCHGVLKRPVRLPCSHIFCKKCILRWLARQKTCPCCRKEVRHRKMVHVNKLQKIIGRLEVKCRNAEAGCQVTCPLAHRKGHQDSCPFELMVCPNEGCMLRVPRGALDEHRQNCQHGAYHRCSLGCGATLGPVERANHNCYRELREAWCQRQQRSRTLVLCLLQHMRKMHRTTGLIRRQLADFLEEDDPLLVGAPQEEAEATPEGSIGVEVWEPQGQATL.

The RING-type zinc finger occupies 20-58 (CSVCHGVLKRPVRLPCSHIFCKKCILRWLARQKTCPCCR). A TRAF-type zinc finger spans residues 101–156 (GHQDSCPFELMVCPNEGCMLRVPRGALDEHRQNCQHGAYHRCSLGCGATLGPVERA).

This chain is RING finger protein 151 (RNF151), found in Bos taurus (Bovine).